The primary structure comprises 253 residues: Ribosomal RNA small subunit methyltransferase G (253 aa).

S-adenosyl-L-methionine-binding positions include G84, L89, 136 to 137 (IE), and R155.

It belongs to the methyltransferase superfamily. RNA methyltransferase RsmG family.

Its subcellular location is the cytoplasm. Functionally, specifically methylates the N7 position of a guanine in 16S rRNA. In Prochlorococcus marinus (strain SARG / CCMP1375 / SS120), this protein is Ribosomal RNA small subunit methyltransferase G.